Consider the following 589-residue polypeptide: Vesicular glutamate transporter 3 (589 aa).

At 1-76 (MPFKAFDTFK…CHCCGLPKRY (76 aa)) the chain is on the cytoplasmic side. Positions 40–49 (TEEEDNIELN) are enriched in acidic residues. The segment at 40–61 (TEEEDNIELNEEGRPVQTSRPS) is disordered. A helical transmembrane segment spans residues 77–97 (IIAIMSGLGFCISFGIRCNLG). Topologically, residues 98–130 (VAIVEMVNNSTVYVDGKPEIQTAQFNWDPETVG) are vesicular. Asn106 carries N-linked (GlcNAc...) asparagine glycosylation. Residues 131 to 151 (LIHGSFFWGYIMTQIPGGFIS) traverse the membrane as a helical segment. At 152 to 153 (NK) the chain is on the cytoplasmic side. Residues 154–174 (FAANRVFGAAIFLTSTLNMFI) form a helical membrane-spanning segment. Residues 175 to 182 (PSAARVHY) are Vesicular-facing. A helical membrane pass occupies residues 183 to 203 (GCVMCVRILQGLVEGVTYPAC). The Cytoplasmic segment spans residues 204-221 (HGMWSKWAPPLERSRLAT). A helical transmembrane segment spans residues 222-242 (TSFCGSYAGAVVAMPLAGVLV). Residues 243 to 249 (QYIGWSS) are Vesicular-facing. Residues 250–270 (VFYIYGMFGIIWYMFWLLQAY) form a helical membrane-spanning segment. At 271-314 (ECPAAHPTISNEEKTYIETSIGEGANVVSLSKFSTPWKRFFTSL) the chain is on the cytoplasmic side. The helical transmembrane segment at 315–335 (PVYAIIVANFCRSWTFYLLLI) threads the bilayer. Topologically, residues 336–353 (SQPAYFEEVFGFAISKVG) are vesicular. Residues 354 to 374 (LLSAVPHMVMTIVVPIGGQLA) form a helical membrane-spanning segment. Residues 375–390 (DYLRSRQILTTTAVRK) lie on the Cytoplasmic side of the membrane. Residues 391–411 (IMNCGGFGMEATLLLVVGFSH) form a helical membrane-spanning segment. At 412 to 413 (TK) the chain is on the vesicular side. Residues 414–434 (GVAISFLVLAVGFSGFAISGF) traverse the membrane as a helical segment. The Cytoplasmic segment spans residues 435–447 (NVNHLDIAPRYAS). A helical transmembrane segment spans residues 448-468 (ILMGISNGVGTLSGMVCPLIV). The Vesicular portion of the chain corresponds to 469–481 (GAMTRHKTREEWQ). The chain crosses the membrane as a helical span at residues 482–502 (NVFLIAALVHYSGVIFYGVFA). The Cytoplasmic segment spans residues 503–586 (SGEKQEWADP…SYQNEERNFS (84 aa)). Residues 559–589 (KKEWKGQRGATLDEEELTSYQNEERNFSTIS) are disordered. The segment covering 580–589 (NEERNFSTIS) has biased composition (basic and acidic residues).

Belongs to the major facilitator superfamily. Sodium/anion cotransporter family. VGLUT subfamily. Expressed in amygdala, cerebellum, hippocampus, medulla, spinal cord and thalamus.

It localises to the cytoplasmic vesicle. The protein resides in the secretory vesicle. Its subcellular location is the synaptic vesicle membrane. The protein localises to the cell membrane. It is found in the synapse. It localises to the synaptosome. It catalyses the reaction L-glutamate(out) = L-glutamate(in). It carries out the reaction 3 Na(+)(out) + phosphate(out) = 3 Na(+)(in) + phosphate(in). The enzyme catalyses chloride(in) = chloride(out). The L-glutamate uniporter activity exhibits a biphasic dependence on chloride concentration. Chloride channel activity is allosterically activated by lumenal H(+) and Cl(-) leading to synaptic vesicles acidification. The glutamate transport activity is allosterically activated by lumenal H(+) and Cl(-), preventing non-vesicular L-glutamate release. In terms of biological role, multifunctional transporter that transports L-glutamate as well as multiple ions such as chloride, sodium and phosphate. At the synaptic vesicle membrane, mainly functions as an uniporter that mediates the uptake of L-glutamate into synaptic vesicles at presynaptic nerve terminals of excitatory neural cells. The L-glutamate uniporter activity is electrogenic and is driven by the proton electrochemical gradient, mainly by the electrical gradient established by the vacuolar H(+)-ATPase across the synaptic vesicle membrane. In addition, functions as a chloride channel that allows a chloride permeation through the synaptic vesicle membrane that affects the proton electrochemical gradient and promotes synaptic vesicles acidification. At the plasma membrane, following exocytosis, functions as a symporter of Na(+) and phosphate from the extracellular space to the cytoplasm allowing synaptic phosphate homeostasis regulation. The symporter activity is electrogenic. Moreover, operates synergistically with SLC18A3/VACHT under a constant H(+) gradient, thereby allowing striatal vesicular acetylcholine uptake. The protein is Vesicular glutamate transporter 3 of Homo sapiens (Human).